The sequence spans 872 residues: G-type lectin S-receptor-like serine/threonine-protein kinase At5g35370 (872 aa).

Positions 1-26 are cleaved as a signal peptide; sequence MKSTFLLLLLLLSLNLLFVFVSCASS. The Extracellular portion of the chain corresponds to 27–443; the sequence is IEFVYPNFTA…NNNRGGSSFP (417 aa). N-linked (GlcNAc...) asparagine glycosylation is found at N33, N148, and N239. One can recognise a Bulb-type lectin domain in the interval 35 to 156; it reads TASNLRFVDS…LNVSLWESFD (122 aa). Residues 283-322 enclose the EGF-like; atypical domain; that stretch reads PMDSCQIPFVCGKLGLCNLDNASENQSCSCPDEMRMDAGK. Cystine bridges form between C287–C299 and C293–C310. N-linked (GlcNAc...) asparagine glycans are attached at residues N303, N307, N342, N379, and N389. One can recognise a PAN domain in the interval 338–423; sequence CEARNISYLE…HDLIGYVKLS (86 aa). 2 disulfide bridges follow: C372-C394 and C376-C382. The chain crosses the membrane as a helical span at residues 444 to 464; sequence VIALVLLPCSGFFLLIALGLL. The Cytoplasmic segment spans residues 465–872; it reads WWRRCAVMRY…IASQEVSGPR (408 aa). The 300-residue stretch at 515 to 814 folds into the Protein kinase domain; sequence ENFKMQIGSG…GSIPLGNPRM (300 aa). ATP contacts are provided by residues 521–529 and K543; that span reads IGSGGFGSV. Residues 603–620 are caM-binding; sequence GNGPVLEWQERFDIALGT. D639 acts as the Proton acceptor in catalysis. S656 carries the post-translational modification Phosphoserine. Phosphothreonine is present on T673. Phosphoserine is present on residues S716 and S859. The tract at residues 836-872 is disordered; that stretch reads QNGESETMVFHRRESSNSGGSRQSASYIASQEVSGPR. Over residues 851 to 861 the composition is skewed to low complexity; that stretch reads SNSGGSRQSAS. A compositionally biased stretch (polar residues) spans 862-872; the sequence is YIASQEVSGPR.

It belongs to the protein kinase superfamily. Ser/Thr protein kinase family.

It localises to the cell membrane. It catalyses the reaction L-seryl-[protein] + ATP = O-phospho-L-seryl-[protein] + ADP + H(+). The catalysed reaction is L-threonyl-[protein] + ATP = O-phospho-L-threonyl-[protein] + ADP + H(+). The protein is G-type lectin S-receptor-like serine/threonine-protein kinase At5g35370 of Arabidopsis thaliana (Mouse-ear cress).